The sequence spans 60 residues: Cytochrome c oxidase subunit 7, mitochondrial (60 aa).

At 2–29 (ANKVIQLQKIFQSSTKPLWWRHPRSALY) the chain is on the mitochondrial matrix side. Residues 30–53 (LYPFYAIFAVAVVTPLLYIPNAIR) traverse the membrane as a helical segment. The Mitochondrial intermembrane segment spans residues 54–60 (GIKAKKA).

Belongs to the cytochrome c oxidase VIIa family. In terms of assembly, component of the cytochrome c oxidase (complex IV, CIV), a multisubunit enzyme composed of 12 subunits. The complex is composed of a catalytic core of 3 subunits COX1, COX2 and COX3, encoded in the mitochondrial DNA, and 9 supernumerary subunits COX4, COX5A (or COX5B), COX6, COX7, COX8, COX9, COX12, COX13 and COX26, which are encoded in the nuclear genome. The complex exists as a monomer or a dimer and forms supercomplexes (SCs) in the inner mitochondrial membrane with a dimer of ubiquinol-cytochrome c oxidoreductase (cytochrome b-c1 complex, complex III, CIII), resulting in 2 different assemblies (supercomplexes III(2)IV and III(2)IV(2)).

Its subcellular location is the mitochondrion inner membrane. It participates in energy metabolism; oxidative phosphorylation. In terms of biological role, component of the cytochrome c oxidase, the last enzyme in the mitochondrial electron transport chain which drives oxidative phosphorylation. The respiratory chain contains 3 multisubunit complexes succinate dehydrogenase (complex II, CII), ubiquinol-cytochrome c oxidoreductase (cytochrome b-c1 complex, complex III, CIII) and cytochrome c oxidase (complex IV, CIV), that cooperate to transfer electrons derived from NADH and succinate to molecular oxygen, creating an electrochemical gradient over the inner membrane that drives transmembrane transport and the ATP synthase. Cytochrome c oxidase is the component of the respiratory chain that catalyzes the reduction of oxygen to water. Electrons originating from reduced cytochrome c in the intermembrane space (IMS) are transferred via the dinuclear copper A center (CU(A)) of COX2 and heme A of COX1 to the active site in COX1, a binuclear center (BNC) formed by heme A3 and copper B (CU(B)). The BNC reduces molecular oxygen to 2 water molecules using 4 electrons from cytochrome c in the IMS and 4 protons from the mitochondrial matrix. The chain is Cytochrome c oxidase subunit 7, mitochondrial (COX7) from Saccharomyces cerevisiae (strain ATCC 204508 / S288c) (Baker's yeast).